A 292-amino-acid polypeptide reads, in one-letter code: Ribosomal protein L11 methyltransferase (292 aa).

Residues threonine 144, glycine 165, aspartate 187, and asparagine 229 each contribute to the S-adenosyl-L-methionine site.

The protein belongs to the methyltransferase superfamily. PrmA family.

The protein localises to the cytoplasm. The enzyme catalyses L-lysyl-[protein] + 3 S-adenosyl-L-methionine = N(6),N(6),N(6)-trimethyl-L-lysyl-[protein] + 3 S-adenosyl-L-homocysteine + 3 H(+). Functionally, methylates ribosomal protein L11. In Pseudomonas putida (strain ATCC 700007 / DSM 6899 / JCM 31910 / BCRC 17059 / LMG 24140 / F1), this protein is Ribosomal protein L11 methyltransferase.